The chain runs to 575 residues: UvrABC system protein C (575 aa).

Residues 16–94 (SQPGVYRMYD…IKLYQPRYNV (79 aa)) enclose the GIY-YIG domain. One can recognise a UVR domain in the interval 204–239 (DQVLTQLISRMETASQNLEFEEAARIRDQIQAVRRV).

Belongs to the UvrC family. In terms of assembly, interacts with UvrB in an incision complex.

It localises to the cytoplasm. Functionally, the UvrABC repair system catalyzes the recognition and processing of DNA lesions. UvrC both incises the 5' and 3' sides of the lesion. The N-terminal half is responsible for the 3' incision and the C-terminal half is responsible for the 5' incision. In Shigella dysenteriae serotype 1 (strain Sd197), this protein is UvrABC system protein C.